Here is a 259-residue protein sequence, read N- to C-terminus: Ribosomal RNA large subunit methyltransferase E (259 aa).

Gly-49, Trp-51, Asp-69, Asp-88, and Asp-112 together coordinate S-adenosyl-L-methionine. The active-site Proton acceptor is the Lys-152. The 59-residue stretch at 199 to 257 (PIAEGDEHTVEIVDTGDEGDGIARIEGYTLFVDDAAEGDTVDVTVTDLKPNYGFAERRD) folds into the TRAM domain.

This sequence belongs to the class I-like SAM-binding methyltransferase superfamily. RNA methyltransferase RlmE family.

It is found in the cytoplasm. The enzyme catalyses uridine(2552) in 23S rRNA + S-adenosyl-L-methionine = 2'-O-methyluridine(2552) in 23S rRNA + S-adenosyl-L-homocysteine + H(+). Its function is as follows. Specifically methylates the uridine in position 2552 of 23S rRNA at the 2'-O position of the ribose in the fully assembled 50S ribosomal subunit. In Halobacterium salinarum (strain ATCC 29341 / DSM 671 / R1), this protein is Ribosomal RNA large subunit methyltransferase E.